We begin with the raw amino-acid sequence, 227 residues long: Small ribosomal subunit protein uS3 (227 aa).

In terms of domain architecture, KH type-2 spans 38–106 (LRKFIKDRFY…NVNINIQEIR (69 aa)).

The protein belongs to the universal ribosomal protein uS3 family. As to quaternary structure, part of the 30S ribosomal subunit. Forms a tight complex with proteins S10 and S14.

In terms of biological role, binds the lower part of the 30S subunit head. Binds mRNA in the 70S ribosome, positioning it for translation. The chain is Small ribosomal subunit protein uS3 from Syntrophomonas wolfei subsp. wolfei (strain DSM 2245B / Goettingen).